The chain runs to 337 residues: Sideroflexin-4 (337 aa).

Position 2 is an N-acetylserine (Ser-2). The next 3 membrane-spanning stretches (helical) occupy residues 111–131 (AAFL…LKGI), 133–153 (SVIL…SING), and 165–185 (SLLM…PQFV). An N6-acetyllysine modification is found at Lys-197. The next 2 helical transmembrane spans lie at 251-271 (ASRI…TYFF) and 293-313 (VLAM…IGQI).

This sequence belongs to the sideroflexin family.

It localises to the mitochondrion inner membrane. Functionally, mitochondrial amino-acid transporter. Does not act as a serine transporter: not able to mediate transport of serine into mitochondria. This chain is Sideroflexin-4, found in Homo sapiens (Human).